Consider the following 435-residue polypeptide: Adenylosuccinate lyase (435 aa).

Residues 4–5, 73–75, and 99–100 each bind N(6)-(1,2-dicarboxyethyl)-AMP; these read RY, RHD, and TS. Histidine 147 acts as the Proton donor/acceptor in catalysis. Residue glutamine 218 coordinates N(6)-(1,2-dicarboxyethyl)-AMP. Serine 268 functions as the Proton donor/acceptor in the catalytic mechanism. Residues serine 269, 274-276, asparagine 282, and 313-317 each bind N(6)-(1,2-dicarboxyethyl)-AMP; these read KKN and SAERV.

This sequence belongs to the lyase 1 family. Adenylosuccinate lyase subfamily. In terms of assembly, homotetramer. Residues from neighboring subunits contribute catalytic and substrate-binding residues to each active site.

The enzyme catalyses N(6)-(1,2-dicarboxyethyl)-AMP = fumarate + AMP. It catalyses the reaction (2S)-2-[5-amino-1-(5-phospho-beta-D-ribosyl)imidazole-4-carboxamido]succinate = 5-amino-1-(5-phospho-beta-D-ribosyl)imidazole-4-carboxamide + fumarate. It participates in purine metabolism; AMP biosynthesis via de novo pathway; AMP from IMP: step 2/2. It functions in the pathway purine metabolism; IMP biosynthesis via de novo pathway; 5-amino-1-(5-phospho-D-ribosyl)imidazole-4-carboxamide from 5-amino-1-(5-phospho-D-ribosyl)imidazole-4-carboxylate: step 2/2. Catalyzes two reactions in de novo purine nucleotide biosynthesis. Catalyzes the breakdown of 5-aminoimidazole- (N-succinylocarboxamide) ribotide (SAICAR or 2-[5-amino-1-(5-phospho-beta-D-ribosyl)imidazole-4-carboxamido]succinate) to 5-aminoimidazole-4-carboxamide ribotide (AICAR or 5-amino-1-(5-phospho-beta-D-ribosyl)imidazole-4-carboxamide) and fumarate, and of adenylosuccinate (ADS or N(6)-(1,2-dicarboxyethyl)-AMP) to adenosine monophosphate (AMP) and fumarate. The sequence is that of Adenylosuccinate lyase (purB) from Deinococcus radiodurans (strain ATCC 13939 / DSM 20539 / JCM 16871 / CCUG 27074 / LMG 4051 / NBRC 15346 / NCIMB 9279 / VKM B-1422 / R1).